The primary structure comprises 159 residues: Dihydrofolate reductase (159 aa).

The 156-residue stretch at 2 to 157 (TLSILVAHDL…IPHTFLHLIR (156 aa)) folds into the DHFR domain. A substrate-binding site is contributed by 6–8 (LVA). NADP(+) contacts are provided by residues 7–8 (VA) and 15–20 (IGFENQ). Aspartate 28 provides a ligand contact to substrate. 44 to 47 (GRKT) is an NADP(+) binding site. Arginine 58 serves as a coordination point for substrate. Residues 63–66 (LTSD) and 93–98 (FGGQIL) each bind NADP(+). Threonine 112 lines the substrate pocket.

This sequence belongs to the dihydrofolate reductase family.

The enzyme catalyses (6S)-5,6,7,8-tetrahydrofolate + NADP(+) = 7,8-dihydrofolate + NADPH + H(+). The protein operates within cofactor biosynthesis; tetrahydrofolate biosynthesis; 5,6,7,8-tetrahydrofolate from 7,8-dihydrofolate: step 1/1. Key enzyme in folate metabolism. Catalyzes an essential reaction for de novo glycine and purine synthesis, and for DNA precursor synthesis. The sequence is that of Dihydrofolate reductase (folA) from Staphylococcus aureus (strain MW2).